We begin with the raw amino-acid sequence, 51 residues long: Large ribosomal subunit protein eL39-like (51 aa).

It belongs to the eukaryotic ribosomal protein eL39 family. Component of a male germ cell-specific 60S large ribosomal subunit (LSU), which contains RPL10L and RPL39L, instead of RPL10 and RPL39 paralogs. The composition of the rest of the complex is similar to classical ribosomes. Highly expressed in spermatocytes and spermatids. Highly expressed in embryonic stem cells.

It is found in the cytoplasm. In terms of biological role, male germ cell-specific component of the ribosome, which is required for the formation of sperm and male fertility. Replaces the RPL39 paralog in the ribosome of male germ cells. The ribosome is a large ribonucleoprotein complex responsible for the synthesis of proteins in the cell. The male germ cell-specific ribosome displays a ribosomal polypeptide exit tunnel of distinct size and charge states compared with the classical ribosome. It is responsible for regulating the biosynthesis and folding of a subset of male germ-cell-specific proteins that are essential for the formation of sperm. This is Large ribosomal subunit protein eL39-like from Mus musculus (Mouse).